We begin with the raw amino-acid sequence, 262 residues long: Acyl-[acyl-carrier-protein]--UDP-N-acetylglucosamine O-acyltransferase (262 aa).

The protein belongs to the transferase hexapeptide repeat family. LpxA subfamily. Homotrimer.

The protein localises to the cytoplasm. It catalyses the reaction a (3R)-hydroxyacyl-[ACP] + UDP-N-acetyl-alpha-D-glucosamine = a UDP-3-O-[(3R)-3-hydroxyacyl]-N-acetyl-alpha-D-glucosamine + holo-[ACP]. The protein operates within glycolipid biosynthesis; lipid IV(A) biosynthesis; lipid IV(A) from (3R)-3-hydroxytetradecanoyl-[acyl-carrier-protein] and UDP-N-acetyl-alpha-D-glucosamine: step 1/6. Its function is as follows. Involved in the biosynthesis of lipid A, a phosphorylated glycolipid that anchors the lipopolysaccharide to the outer membrane of the cell. In Vibrio campbellii (strain ATCC BAA-1116), this protein is Acyl-[acyl-carrier-protein]--UDP-N-acetylglucosamine O-acyltransferase.